The primary structure comprises 254 residues: Pyruvate aldolase (254 aa).

The Proton acceptor role is filled by H48. A divalent metal cation is bound by residues E151 and D177.

The protein belongs to the HpcH/HpaI aldolase family. Requires a divalent metal cation as cofactor.

The catalysed reaction is D-glyceraldehyde + pyruvate = 2-dehydro-3-deoxy-L-galactonate. Functionally, aldolase which can catalyze in vitro the aldolisation reaction between pyruvate (PA) and D-glyceraldehyde (D-GA) to form 2-dehydro-3-deoxy-L-galactonate. This is Pyruvate aldolase from Rhizobium etli (strain ATCC 51251 / DSM 11541 / JCM 21823 / NBRC 15573 / CFN 42).